Here is a 55-residue protein sequence, read N- to C-terminus: Large ribosomal subunit protein bL33 (55 aa).

The protein belongs to the bacterial ribosomal protein bL33 family.

This is Large ribosomal subunit protein bL33 from Edwardsiella ictaluri (strain 93-146).